A 195-amino-acid polypeptide reads, in one-letter code: Peptidyl-tRNA hydrolase (195 aa).

Residue Tyr-18 coordinates tRNA. Residue His-23 is the Proton acceptor of the active site. Residues Tyr-69, Asn-71, and Asn-117 each coordinate tRNA.

It belongs to the PTH family. In terms of assembly, monomer.

The protein localises to the cytoplasm. It carries out the reaction an N-acyl-L-alpha-aminoacyl-tRNA + H2O = an N-acyl-L-amino acid + a tRNA + H(+). Its function is as follows. Hydrolyzes ribosome-free peptidyl-tRNAs (with 1 or more amino acids incorporated), which drop off the ribosome during protein synthesis, or as a result of ribosome stalling. Catalyzes the release of premature peptidyl moieties from peptidyl-tRNA molecules trapped in stalled 50S ribosomal subunits, and thus maintains levels of free tRNAs and 50S ribosomes. This is Peptidyl-tRNA hydrolase from Nitrosomonas eutropha (strain DSM 101675 / C91 / Nm57).